The sequence spans 490 residues: Betaine aldehyde dehydrogenase (490 aa).

N93 contributes to the K(+) binding site. NAD(+) is bound at residue 150–152; the sequence is GAW. The active-site Charge relay system is K162. 176–179 provides a ligand contact to NAD(+); the sequence is KPSE. V180 serves as a coordination point for K(+). 230–233 is an NAD(+) binding site; sequence GTAT. L246 contributes to the K(+) binding site. Residue E252 is the Proton acceptor of the active site. NAD(+) is bound by residues G254, C286, and E387. Residue C286 is the Nucleophile of the active site. At C286 the chain carries Cysteine sulfenic acid (-SOH). Residues K457 and G460 each coordinate K(+). Catalysis depends on E464, which acts as the Charge relay system.

The protein belongs to the aldehyde dehydrogenase family. In terms of assembly, dimer of dimers. The cofactor is K(+).

The enzyme catalyses betaine aldehyde + NAD(+) + H2O = glycine betaine + NADH + 2 H(+). It functions in the pathway amine and polyamine biosynthesis; betaine biosynthesis via choline pathway; betaine from betaine aldehyde: step 1/1. Involved in the biosynthesis of the osmoprotectant glycine betaine. Catalyzes the irreversible oxidation of betaine aldehyde to the corresponding acid. This chain is Betaine aldehyde dehydrogenase, found in Xanthomonas campestris pv. campestris (strain ATCC 33913 / DSM 3586 / NCPPB 528 / LMG 568 / P 25).